Reading from the N-terminus, the 295-residue chain is F-box protein SKIP24 (295 aa).

An F-box; degenerate domain is found at 19 to 66 (VKSSTFSYKDLCCISISSRRLFRLSCDDSLWDLLLVHDFPNHIVSASS). Coiled coils occupy residues 82 to 129 (REKE…SSLQ) and 167 to 209 (EGRL…ESMK). A disordered region spans residues 217-245 (KSIRNGDQGSNGKTKKLKTSINYSGDQVS). The span at 235–245 (TSINYSGDQVS) shows a compositional bias: polar residues.

Part of a SCF (ASK-cullin-F-box) protein ligase complex. Interacts with SKP1A/ASK1 and SPK1B/ASK2.

Its pathway is protein modification; protein ubiquitination. Functionally, component of SCF(ASK-cullin-F-box) E3 ubiquitin ligase complexes, which may mediate the ubiquitination and subsequent proteasomal degradation of target proteins. This is F-box protein SKIP24 (SKIP24) from Arabidopsis thaliana (Mouse-ear cress).